A 445-amino-acid polypeptide reads, in one-letter code: MLTYKVSPSSVYGNAFIPSSKSHTLRAILWASVAEGKSIIYNYLDSPDTEAMICACKQMGASIKKFPQILEIVGNPLAIFPKYTLIDAGNSGIVLRFMTALACVFSKEITVTGSSQLQRRPMAPLLQALRNFGASFHFSSDKSVLPFTMSGPLRSAYSDVEGSDSQFASALAVACSLAEGPCSFTIIEPKERPWFDLSLWWLEKLHLPYSCSDTTYSFPGSSHPQGFSYHVTGDFSSAAFIAAAALLSKSLQPIRLRNLDILDIQGDKIFFSLMQNLGASIQYDNEEILVFPSSFSGGSIDMDGCIDALPILTVLCCFADSPSHLYNARSAKDKESDRILAITEELQKMGACIQPTHDGLLVNPSPLYGAVLDSHDDHRIAMALTIAALYASGDSRIHNTACVRKTFPNFVQTLNIMEARIEECHDNYSMWSTHKRKVFARESFG.

Positions 21, 22, and 26 each coordinate 3-phosphoshikimate. Lys21 contacts phosphoenolpyruvate. Phosphoenolpyruvate-binding residues include Gly92 and Arg120. Residues Ser165, Gln166, Asp307, and Lys334 each coordinate 3-phosphoshikimate. Gln166 is a binding site for phosphoenolpyruvate. Asp307 serves as the catalytic Proton acceptor. Residues Arg338, Arg379, and Lys405 each coordinate phosphoenolpyruvate.

It belongs to the EPSP synthase family. In terms of assembly, monomer.

The protein resides in the cytoplasm. It carries out the reaction 3-phosphoshikimate + phosphoenolpyruvate = 5-O-(1-carboxyvinyl)-3-phosphoshikimate + phosphate. Its pathway is metabolic intermediate biosynthesis; chorismate biosynthesis; chorismate from D-erythrose 4-phosphate and phosphoenolpyruvate: step 6/7. Catalyzes the transfer of the enolpyruvyl moiety of phosphoenolpyruvate (PEP) to the 5-hydroxyl of shikimate-3-phosphate (S3P) to produce enolpyruvyl shikimate-3-phosphate and inorganic phosphate. This chain is 3-phosphoshikimate 1-carboxyvinyltransferase, found in Chlamydia pneumoniae (Chlamydophila pneumoniae).